We begin with the raw amino-acid sequence, 756 residues long: Xylosyl- and glucuronyltransferase LARGE1 (756 aa).

Topologically, residues 1 to 10 (MLGICRGRRK) are cytoplasmic. The helical; Signal-anchor for type II membrane protein transmembrane segment at 11-31 (FLAASLTLLCIPAITWIYLFA) threads the bilayer. The Lumenal portion of the chain corresponds to 32–756 (GSFEDGKPVS…LKYLTAENNS (725 aa)). 2 disordered regions span residues 43 to 64 (SPLE…ERES) and 82 to 108 (QLSL…EEGT). A compositionally biased stretch (polar residues) spans 44–58 (PLESQAHSPRYTASS). Positions 53–95 (RYTASSQRERESLEVRVREVEEENRALRRQLSLAQGQSPAHHR) form a coiled coil. 3 N-linked (GlcNAc...) asparagine glycosylation sites follow: Asn97, Asn122, and Asn148. Residues 138-413 (IHVAIVCAGY…FLEYDGNLLR (276 aa)) are xylosyltransferase activity. Asp242 and Asp244 together coordinate Mn(2+). Asn272 is a glycosylation site (N-linked (GlcNAc...) asparagine). Positions 414–756 (RELFGCPSET…LKYLTAENNS (343 aa)) are glucuronyltransferase activity. Residues Asp563 and Asp565 each coordinate Mn(2+).

It in the C-terminal section; belongs to the glycosyltransferase 49 family. The protein in the N-terminal section; belongs to the glycosyltransferase 8 family. In terms of assembly, interacts with DAG1 (via the N-terminal domain of alpha-DAG1); the interaction increases binding of DAG1 to laminin. Interacts with B4GAT1. The cofactor is Mn(2+). Ubiquitous. Highest expression in heart, diaphragm and brain, where it is especially found in cerebral cortex, hippocampus, and trigeminal ganglion.

The protein resides in the golgi apparatus membrane. It catalyses the reaction 3-O-[beta-D-GlcA-(1-&gt;3)-beta-D-Xyl-(1-&gt;4)-Rib-ol-P-Rib-ol-P-3-beta-D-GalNAc-(1-&gt;3)-beta-D-GlcNAc-(1-&gt;4)-(O-6-P-alpha-D-Man)]-Thr-[protein] + UDP-alpha-D-xylose = 3-O-[alpha-D-Xyl-(1-&gt;3)-beta-D-GlcA-(1-&gt;4)-beta-D-Xyl-(1-&gt;4)-Rib-ol-P-Rib-ol-P-3-beta-D-GalNAc-(1-&gt;3)-beta-D-GlcNAc-(1-&gt;4)-(O-6-P-alpha-D-Man)]-Thr-[protein] + UDP + H(+). It carries out the reaction 3-O-{(1-&gt;[3)-alpha-D-Xyl-(1-&gt;3)-beta-D-GlcA-(1-&gt;](n)-4)-beta-D-Xyl-(1-&gt;4)-Rib-ol-P-Rib-ol-P-3-beta-D-GalNAc-(1-&gt;3)-beta-D-GlcNAc-(1-&gt;4)-O-6-P-alpha-D-Man}-L-Thr-[protein] + UDP-alpha-D-glucuronate = 3-O-{beta-D-GlcA-(1-&gt;[3)-alpha-D-Xyl-(1-&gt;3)-beta-D-GlcA-(1-&gt;](n)-4)-beta-D-Xyl-(1-&gt;4)-Rib-ol-P-Rib-ol-P-3-beta-D-GalNAc-(1-&gt;3)-beta-D-GlcNAc-(1-&gt;4)-O-6-P-alpha-D-Man}-L-Thr-[protein] + UDP + H(+). The enzyme catalyses 3-O-{beta-D-GlcA-(1-&gt;[3)-alpha-D-Xyl-(1-&gt;3)-beta-D-GlcA-(1-&gt;](n)-4)-beta-D-Xyl-(1-&gt;4)-Rib-ol-P-Rib-ol-P-3-beta-D-GalNAc-(1-&gt;3)-beta-D-GlcNAc-(1-&gt;4)-O-6-P-alpha-D-Man}-L-Thr-[protein] + UDP-alpha-D-xylose = 3-O-{(1-&gt;[3)-alpha-D-Xyl-(1-&gt;3)-beta-D-GlcA-(1-&gt;](n+1)-4)-beta-D-Xyl-(1-&gt;4)-Rib-ol-P-Rib-ol-P-3-beta-D-GalNAc-(1-&gt;3)-beta-D-GlcNAc-(1-&gt;4)-O-6-P-alpha-D-Man}-L-Thr-[protein] + UDP + H(+). It participates in protein modification; protein glycosylation. In terms of biological role, bifunctional glycosyltransferase with both alpha-1,3-xylosyltransferase and beta-1,3-glucuronyltransferase activities involved in the maturation of alpha-dystroglycan (DAG1) by glycosylation leading to DAG1 binding to laminin G-like domain-containing extracellular proteins with high affinity. Elongates the glucuronyl-beta-1,4-xylose-beta disaccharide primer structure initiated by B4GAT1 by adding repeating units [-3-Xylose-alpha-1,3-GlcA-beta-1-] to produce a heteropolysaccharide. Requires the phosphorylation of core M3 (O-mannosyl trisaccharide) by POMK to elongate the glucuronyl-beta-1,4-xylose-beta disaccharide primer. Plays a key role in skeletal muscle function and regeneration. This chain is Xylosyl- and glucuronyltransferase LARGE1, found in Mus musculus (Mouse).